The following is a 440-amino-acid chain: Xylose isomerase (440 aa).

Residues histidine 101 and aspartate 104 contribute to the active site. Mg(2+) is bound by residues glutamate 232, glutamate 268, histidine 271, aspartate 296, aspartate 307, aspartate 309, and aspartate 339.

It belongs to the xylose isomerase family. In terms of assembly, homotetramer. Mg(2+) serves as cofactor.

Its subcellular location is the cytoplasm. The enzyme catalyses alpha-D-xylose = alpha-D-xylulofuranose. The sequence is that of Xylose isomerase from Escherichia fergusonii (strain ATCC 35469 / DSM 13698 / CCUG 18766 / IAM 14443 / JCM 21226 / LMG 7866 / NBRC 102419 / NCTC 12128 / CDC 0568-73).